The sequence spans 236 residues: 2-C-methyl-D-erythritol 4-phosphate cytidylyltransferase (236 aa).

This sequence belongs to the IspD/TarI cytidylyltransferase family. IspD subfamily.

The enzyme catalyses 2-C-methyl-D-erythritol 4-phosphate + CTP + H(+) = 4-CDP-2-C-methyl-D-erythritol + diphosphate. Its pathway is isoprenoid biosynthesis; isopentenyl diphosphate biosynthesis via DXP pathway; isopentenyl diphosphate from 1-deoxy-D-xylulose 5-phosphate: step 2/6. Catalyzes the formation of 4-diphosphocytidyl-2-C-methyl-D-erythritol from CTP and 2-C-methyl-D-erythritol 4-phosphate (MEP). The sequence is that of 2-C-methyl-D-erythritol 4-phosphate cytidylyltransferase from Burkholderia thailandensis (strain ATCC 700388 / DSM 13276 / CCUG 48851 / CIP 106301 / E264).